Consider the following 564-residue polypeptide: Mitochondrial distribution and morphology protein 34 (564 aa).

In terms of domain architecture, SMP-LTD spans 1-208; sequence MAFNFNWSPL…VPEYRDRESE (208 aa). 5 disordered regions span residues 208 to 240, 336 to 397, 404 to 423, 434 to 517, and 532 to 564; these read ESVN…NALN, SGGS…SAPT, QFSE…PQND, RISQ…DPRQ, and IQEE…AYGH. Residues 209–219 are compositionally biased toward polar residues; the sequence is SVNTLDQSSGP. Basic residues predominate over residues 351–365; sequence SGRHPRPHGKKRKKR. The span at 366–376 shows a compositional bias: basic and acidic residues; the sequence is VVDLRRPKTTD. The span at 380-390 shows a compositional bias: low complexity; sequence SVSGESVFSSE. 2 stretches are compositionally biased toward polar residues: residues 438–462 and 477–503; these read GEHT…SRNS and PRNS…SSAI.

It belongs to the MDM34 family. Component of the ER-mitochondria encounter structure (ERMES) or MDM complex, composed of mmm1, mdm10, mdm12 and mdm34.

The protein localises to the mitochondrion outer membrane. In terms of biological role, component of the ERMES/MDM complex, which serves as a molecular tether to connect the endoplasmic reticulum (ER) and mitochondria. Components of this complex are involved in the control of mitochondrial shape and protein biogenesis, and function in nonvesicular lipid trafficking between the ER and mitochondria. Mdm34 is required for the interaction of the ER-resident membrane protein mmm1 and the outer mitochondrial membrane-resident beta-barrel protein mdm10. The chain is Mitochondrial distribution and morphology protein 34 from Talaromyces stipitatus (strain ATCC 10500 / CBS 375.48 / QM 6759 / NRRL 1006) (Penicillium stipitatum).